Reading from the N-terminus, the 182-residue chain is ADP-ribosylation factor-like protein 3 (182 aa).

Gly2 is lipidated: N-myristoyl glycine. GTP-binding positions include 24 to 31 (GLDNAGKT), 67 to 71 (DIGGQ), and 126 to 129 (NKQD).

This sequence belongs to the small GTPase superfamily. Arf family.

The protein localises to the golgi apparatus membrane. The protein resides in the cytoplasm. It localises to the cytoskeleton. It is found in the spindle. Its subcellular location is the nucleus. The protein localises to the microtubule organizing center. The protein resides in the centrosome. It localises to the cell projection. It is found in the cilium. Small GTP-binding protein which cycles between an inactive GDP-bound and an active GTP-bound form, and the rate of cycling is regulated by guanine nucleotide exchange factors (GEF) and GTPase-activating proteins (GAP). Required for normal cytokinesis and cilia signaling. Required for targeting proteins to the ciliary membrane by releasing myristoylated protein from unc119 cargo adapters into the cilium. In Taeniopygia guttata (Zebra finch), this protein is ADP-ribosylation factor-like protein 3 (ARL3).